The chain runs to 364 residues: Mannose-1-phosphate guanyltransferase (364 aa).

The protein belongs to the transferase hexapeptide repeat family.

Its subcellular location is the cytoplasm. The catalysed reaction is alpha-D-mannose 1-phosphate + GTP + H(+) = GDP-alpha-D-mannose + diphosphate. It functions in the pathway nucleotide-sugar biosynthesis; GDP-alpha-D-mannose biosynthesis; GDP-alpha-D-mannose from alpha-D-mannose 1-phosphate (GTP route): step 1/1. Its function is as follows. Involved in cell wall synthesis where it is required for glycosylation. Involved in cell cycle progression through cell-size checkpoint. The chain is Mannose-1-phosphate guanyltransferase (MPG1) from Gibberella zeae (strain ATCC MYA-4620 / CBS 123657 / FGSC 9075 / NRRL 31084 / PH-1) (Wheat head blight fungus).